Here is an 861-residue protein sequence, read N- to C-terminus: Leucine--tRNA ligase (861 aa).

The 'HIGH' region motif lies at 42–52 (PYPSGRLHMGH). Positions 619 to 623 (KMSKS) match the 'KMSKS' region motif. ATP is bound at residue K622.

It belongs to the class-I aminoacyl-tRNA synthetase family.

Its subcellular location is the cytoplasm. It catalyses the reaction tRNA(Leu) + L-leucine + ATP = L-leucyl-tRNA(Leu) + AMP + diphosphate. This is Leucine--tRNA ligase from Haemophilus influenzae (strain PittEE).